The following is a 117-amino-acid chain: MPAKKRKTTRQRRRSKARSASANTAALRKVSKERDQARRKLRAAQKKLAKAKKDASRKLAKLRKEAARKVAAAKKTRAPSKKGRKKATRKKGGGRSRKTARKVSTMKRGRGRPRKKA.

2 stretches are compositionally biased toward basic residues: residues 1 to 17 (MPAK…RSKA) and 39 to 50 (RKLRAAQKKLAK). Positions 1–117 (MPAKKRKTTR…RGRGRPRKKA (117 aa)) are disordered. Basic and acidic residues predominate over residues 51–68 (AKKDASRKLAKLRKEAAR). Positions 71 to 117 (AAAKKTRAPSKKGRKKATRKKGGGRSRKTARKVSTMKRGRGRPRKKA) are enriched in basic residues.

Binds DNA in vitro. The polypeptide is Histone-like protein Hq1 (hcbA) (Coxiella burnetii (strain RSA 493 / Nine Mile phase I)).